A 216-amino-acid polypeptide reads, in one-letter code: MIMNFNMEEWEPRTQLGRLVKEGVITSIDEIFEEGHPIMELEIIDALLPDLEEEVIDVNLVQRMHKSGRKVNFRVIVAVGNKDGYVGLGQGKAREVGPAIRKAVDDAKFNIIKVRRGCGDWGCVCGREHTVPFKVSGKSGSVRVTLIPAPGGVGLAIGDVGKTIMRLAGIDDVWSHTRGQTQTTVNFARATFDALKQLSKVKASEKDLKNLGVCST.

An S5 DRBM domain is found at 51–114; the sequence is LEEEVIDVNL…DDAKFNIIKV (64 aa).

The protein belongs to the universal ribosomal protein uS5 family. In terms of assembly, part of the 30S ribosomal subunit. Contacts protein S4.

Its function is as follows. With S4 and S12 plays an important role in translational accuracy. This chain is Small ribosomal subunit protein uS5, found in Methanothermobacter thermautotrophicus (strain ATCC 29096 / DSM 1053 / JCM 10044 / NBRC 100330 / Delta H) (Methanobacterium thermoautotrophicum).